Consider the following 598-residue polypeptide: NADH-ubiquinone oxidoreductase chain 5 (598 aa).

Transmembrane regions (helical) follow at residues 1-21 (MLEL…IFLF), 28-48 (FAES…ILLM), 81-101 (CFFV…FYYM), 115-135 (GLFL…QLLI), 171-191 (GDIG…DWSF), 193-213 (GLYA…LAAA), 233-253 (TPVS…FLLI), 265-285 (IQLM…ICAL), 293-312 (VVAF…VGAG), 323-343 (MHAF…HGLQ), 362-382 (SVCF…AGFF), 399-421 (WAVG…LLYF), 454-474 (VIAG…CLSL), 480-500 (LAAV…VNLL), 509-529 (IPEL…HKLI), and 576-596 (LIKM…GIMI).

Belongs to the complex I subunit 5 family.

It is found in the mitochondrion inner membrane. It catalyses the reaction a ubiquinone + NADH + 5 H(+)(in) = a ubiquinol + NAD(+) + 4 H(+)(out). In terms of biological role, core subunit of the mitochondrial membrane respiratory chain NADH dehydrogenase (Complex I) that is believed to belong to the minimal assembly required for catalysis. Complex I functions in the transfer of electrons from NADH to the respiratory chain. The immediate electron acceptor for the enzyme is believed to be ubiquinone. This chain is NADH-ubiquinone oxidoreductase chain 5 (ND5), found in Branchiostoma lanceolatum (Common lancelet).